Reading from the N-terminus, the 472-residue chain is Eukaryotic translation initiation factor 2 subunit 3 (472 aa).

A tr-type G domain is found at 39–247 (QATINIGTIG…YIVNKIPVPV (209 aa)). The tract at residues 48–55 (GHVAHGKS) is G1. 51-56 (AHGKST) contributes to the GTP binding site. Residues 76 to 80 (NITIK) are G2. Residues 134-137 (DCPG) are G3. GTP contacts are provided by residues 190-193 (NKID) and 225-227 (SAQ). Positions 190 to 193 (NKID) are G4. The tract at residues 225–227 (SAQ) is G5. Residues 457–469 (GQIRRGVTITPTV) are interacts with cdc123.

This sequence belongs to the TRAFAC class translation factor GTPase superfamily. Classic translation factor GTPase family. EIF2G subfamily. In terms of assembly, eukaryotic translation initiation factor 2 eIF2 is a heterotrimeric complex composed of an alpha (EIF2S1), a beta (EIF2S2) and a gamma (EIF2S3) chain. eIF2 is member of the 43S pre-initiation complex (43S PIC).

The protein localises to the cytoplasm. It localises to the cytosol. The enzyme catalyses GTP + H2O = GDP + phosphate + H(+). Member of the eIF2 complex that functions in the early steps of protein synthesis by forming a ternary complex with GTP and initiator tRNA. This complex binds to a 40S ribosomal subunit, followed by mRNA binding to form the 43S pre-initiation complex (43S PIC). Junction of the 60S ribosomal subunit to form the 80S initiation complex is preceded by hydrolysis of the GTP bound to eIF2 and release of an eIF2-GDP binary complex. In order for eIF2 to recycle and catalyze another round of initiation, the GDP bound to eIF2 must exchange with GTP by way of a reaction catalyzed by eIF-2B. This Danio rerio (Zebrafish) protein is Eukaryotic translation initiation factor 2 subunit 3.